A 212-amino-acid chain; its full sequence is Small ribosomal subunit protein uS4c (212 aa).

One can recognise an S4 RNA-binding domain in the interval 89–152 (MRLDNIIFRL…RSRALVDKNL (64 aa)).

The protein belongs to the universal ribosomal protein uS4 family. In terms of assembly, part of the 30S ribosomal subunit. Contacts protein S5. The interaction surface between S4 and S5 is involved in control of translational fidelity.

It is found in the plastid. The protein localises to the chloroplast. One of the primary rRNA binding proteins, it binds directly to 16S rRNA where it nucleates assembly of the body of the 30S subunit. Functionally, with S5 and S12 plays an important role in translational accuracy. This is Small ribosomal subunit protein uS4c (rps4) from Staurastrum punctulatum (Green alga).